The following is a 191-amino-acid chain: dTTP/UTP pyrophosphatase (191 aa).

D65 serves as the catalytic Proton acceptor.

The protein belongs to the Maf family. YhdE subfamily. A divalent metal cation is required as a cofactor.

The protein localises to the cytoplasm. The catalysed reaction is dTTP + H2O = dTMP + diphosphate + H(+). It catalyses the reaction UTP + H2O = UMP + diphosphate + H(+). Its function is as follows. Nucleoside triphosphate pyrophosphatase that hydrolyzes dTTP and UTP. May have a dual role in cell division arrest and in preventing the incorporation of modified nucleotides into cellular nucleic acids. The chain is dTTP/UTP pyrophosphatase from Leptospira biflexa serovar Patoc (strain Patoc 1 / Ames).